The primary structure comprises 77 residues: U18-lycotoxin-Ls1a (77 aa).

The N-terminal stretch at 1–22 (MSPKMQALLLLLGLITLLVVHA) is a signal peptide. Residues 23 to 34 (EEELSENTESER) constitute a propeptide that is removed on maturation. Intrachain disulfides connect C36–C51, C43–C56, C50–C67, and C58–C65.

Belongs to the neurotoxin 02 (plectoxin) family. As to expression, expressed by the venom gland.

The protein resides in the secreted. This is U18-lycotoxin-Ls1a from Lycosa singoriensis (Wolf spider).